Here is a 501-residue protein sequence, read N- to C-terminus: Splicing factor 3A subunit 3 (501 aa).

Met1 carries the post-translational modification N-acetylmethionine. A phosphoserine mark is found at Ser54 and Ser121. The Nuclear localization signal signature appears at 175 to 179; that stretch reads KERKN. A phosphoserine mark is found at Ser295 and Ser299. Positions 343-354 are enriched in basic and acidic residues; it reads ENVQRKQARTGE. The segment at 343 to 374 is disordered; the sequence is ENVQRKQARTGEEREEEEEEQISESESEDEEN. The segment covering 355–374 has biased composition (acidic residues); that stretch reads EREEEEEEQISESESEDEEN. Phosphoserine occurs at positions 365, 367, and 369. The Matrin-type zinc-finger motif lies at 406–437; it reads YNCEICGNYTYRGPKAFQRHFAEWRHAHGMRC. The residue at position 475 (Thr475) is a Phosphothreonine.

Belongs to the SF3A3 family. Component of the 17S U2 SnRNP complex, a ribonucleoprotein complex that contains small nuclear RNA (snRNA) U2 and a number of specific proteins. Part of the SF3A subcomplex of the 17S U2 SnRNP complex which is composed of three subunits; SF3A3/SAP61, SF3A2/SAP62 and SF3A1/SAP114. SF3A associates with the splicing factor SF3B and a 12S RNA unit to form the mature 17S U2 small nuclear ribonucleoprotein complex (17S U2 snRNP). Identified in the spliceosome 'E' complex, a precursor of the spliceosome 'A' complex. Identified in the spliceosome 'A' and 'B' complexes. Identified in the spliceosome 'C' complex. As to expression, ubiquitous.

It localises to the nucleus speckle. The protein resides in the nucleus. In terms of biological role, component of the 17S U2 SnRNP complex of the spliceosome, a large ribonucleoprotein complex that removes introns from transcribed pre-mRNAs. The 17S U2 SnRNP complex (1) directly participates in early spliceosome assembly and (2) mediates recognition of the intron branch site during pre-mRNA splicing by promoting the selection of the pre-mRNA branch-site adenosine, the nucleophile for the first step of splicing. Within the 17S U2 SnRNP complex, SF3A3 is part of the SF3A subcomplex that contributes to the assembly of the 17S U2 snRNP, and the subsequent assembly of the pre-spliceosome 'E' complex and the pre-catalytic spliceosome 'A' complex. Involved in pre-mRNA splicing as a component of pre-catalytic spliceosome 'B' complexes. This is Splicing factor 3A subunit 3 (SF3A3) from Homo sapiens (Human).